A 453-amino-acid chain; its full sequence is Ribulose bisphosphate carboxylase large chain (453 aa).

Positions 1 to 2 (MS) are excised as a propeptide. An N-acetylproline modification is found at P3. N6,N6,N6-trimethyllysine is present on K14. The substrate site is built by N123 and T173. Catalysis depends on K175, which acts as the Proton acceptor. Substrate is bound at residue K177. Residues K201, D203, and E204 each coordinate Mg(2+). K201 is subject to N6-carboxylysine. Residue H294 is the Proton acceptor of the active site. Positions 295, 327, and 379 each coordinate substrate.

The protein belongs to the RuBisCO large chain family. Type I subfamily. As to quaternary structure, heterohexadecamer of 8 large chains and 8 small chains; disulfide-linked. The disulfide link is formed within the large subunit homodimers. The cofactor is Mg(2+). Post-translationally, the disulfide bond which can form in the large chain dimeric partners within the hexadecamer appears to be associated with oxidative stress and protein turnover.

The protein resides in the plastid. It is found in the chloroplast. It catalyses the reaction 2 (2R)-3-phosphoglycerate + 2 H(+) = D-ribulose 1,5-bisphosphate + CO2 + H2O. It carries out the reaction D-ribulose 1,5-bisphosphate + O2 = 2-phosphoglycolate + (2R)-3-phosphoglycerate + 2 H(+). Its function is as follows. RuBisCO catalyzes two reactions: the carboxylation of D-ribulose 1,5-bisphosphate, the primary event in carbon dioxide fixation, as well as the oxidative fragmentation of the pentose substrate in the photorespiration process. Both reactions occur simultaneously and in competition at the same active site. This chain is Ribulose bisphosphate carboxylase large chain, found in Galium elongatum (Great marsh bedstraw).